The chain runs to 282 residues: Aspergillopepsin-2 (282 aa).

Residues 1–18 (MKFSTILTGSLFATAALA) form the signal peptide. Propeptides lie at residues 19 to 59 (APLT…GTTN) and 99 to 109 (GGGYGYWKNKR). A compositionally biased stretch (basic residues) spans 27-39 (ARKEARAAGKRHS). The disordered stretch occupies residues 27 to 46 (ARKEARAAGKRHSNPPYIPG). Glutamine 110 is subject to Pyrrolidone carboxylic acid. Cystine bridges form between cysteine 115–cysteine 139 and cysteine 127–cysteine 210.

The protein belongs to the peptidase G1 family. As to quaternary structure, heterodimer of two noncovalently bound light and heavy chains.

It carries out the reaction Preferential cleavage in B chain of insulin: 3-Asn-|-Gln-4, 13-Gly-|-Ala-14, and 26-Tyr-|-Thr-27.. This Aspergillus niger protein is Aspergillopepsin-2.